The primary structure comprises 571 residues: Proline--tRNA ligase (571 aa).

Belongs to the class-II aminoacyl-tRNA synthetase family. ProS type 1 subfamily. Homodimer.

The protein resides in the cytoplasm. The catalysed reaction is tRNA(Pro) + L-proline + ATP = L-prolyl-tRNA(Pro) + AMP + diphosphate. Catalyzes the attachment of proline to tRNA(Pro) in a two-step reaction: proline is first activated by ATP to form Pro-AMP and then transferred to the acceptor end of tRNA(Pro). As ProRS can inadvertently accommodate and process non-cognate amino acids such as alanine and cysteine, to avoid such errors it has two additional distinct editing activities against alanine. One activity is designated as 'pretransfer' editing and involves the tRNA(Pro)-independent hydrolysis of activated Ala-AMP. The other activity is designated 'posttransfer' editing and involves deacylation of mischarged Ala-tRNA(Pro). The misacylated Cys-tRNA(Pro) is not edited by ProRS. The polypeptide is Proline--tRNA ligase (Photobacterium profundum (strain SS9)).